Consider the following 370-residue polypeptide: Aminomethyltransferase (370 aa).

This sequence belongs to the GcvT family. In terms of assembly, the glycine cleavage system is composed of four proteins: P, T, L and H.

It carries out the reaction N(6)-[(R)-S(8)-aminomethyldihydrolipoyl]-L-lysyl-[protein] + (6S)-5,6,7,8-tetrahydrofolate = N(6)-[(R)-dihydrolipoyl]-L-lysyl-[protein] + (6R)-5,10-methylene-5,6,7,8-tetrahydrofolate + NH4(+). Its function is as follows. The glycine cleavage system catalyzes the degradation of glycine. In Clostridium botulinum (strain 657 / Type Ba4), this protein is Aminomethyltransferase.